Reading from the N-terminus, the 87-residue chain is UPF0250 protein ETA_23570 (87 aa).

It belongs to the UPF0250 family.

This Erwinia tasmaniensis (strain DSM 17950 / CFBP 7177 / CIP 109463 / NCPPB 4357 / Et1/99) protein is UPF0250 protein ETA_23570.